Consider the following 113-residue polypeptide: Putative membrane protein insertion efficiency factor (113 aa).

This sequence belongs to the UPF0161 family.

The protein localises to the cell inner membrane. In terms of biological role, could be involved in insertion of integral membrane proteins into the membrane. This Campylobacter concisus (strain 13826) protein is Putative membrane protein insertion efficiency factor.